The chain runs to 550 residues: Hydroxylamine reductase (550 aa).

[2Fe-2S] cluster contacts are provided by cysteine 3, cysteine 6, cysteine 18, and cysteine 25. Hybrid [4Fe-2O-2S] cluster is bound by residues histidine 249, glutamate 273, cysteine 317, cysteine 405, cysteine 433, cysteine 458, glutamate 492, and lysine 494. Cysteine 405 is subject to Cysteine persulfide.

Belongs to the HCP family. It depends on [2Fe-2S] cluster as a cofactor. Hybrid [4Fe-2O-2S] cluster is required as a cofactor.

It localises to the cytoplasm. The enzyme catalyses A + NH4(+) + H2O = hydroxylamine + AH2 + H(+). Its function is as follows. Catalyzes the reduction of hydroxylamine to form NH(3) and H(2)O. In Salmonella paratyphi A (strain ATCC 9150 / SARB42), this protein is Hydroxylamine reductase.